The following is a 349-amino-acid chain: GTPase Obg (349 aa).

In terms of domain architecture, Obg spans 1–159 (MKFLDQAKVY…LWIWLRLKLI (159 aa)). An OBG-type G domain is found at 160–327 (ADAGLIGLPN…VLRALMRVVQ (168 aa)). GTP contacts are provided by residues 166–173 (GLPNAGKS), 191–195 (FTTLH), 212–215 (DIPG), 279–282 (SQID), and 308–310 (SSA). Residues Ser-173 and Thr-193 each coordinate Mg(2+).

The protein belongs to the TRAFAC class OBG-HflX-like GTPase superfamily. OBG GTPase family. Monomer. The cofactor is Mg(2+).

The protein resides in the cytoplasm. Functionally, an essential GTPase which binds GTP, GDP and possibly (p)ppGpp with moderate affinity, with high nucleotide exchange rates and a fairly low GTP hydrolysis rate. Plays a role in control of the cell cycle, stress response, ribosome biogenesis and in those bacteria that undergo differentiation, in morphogenesis control. The chain is GTPase Obg from Chelativorans sp. (strain BNC1).